The chain runs to 114 residues: uncharacterized protein (114 aa).

A disordered region spans residues 1–24; it reads MFGACYKQPLKPSGSEPPAEECRM.

As to expression, expressed in kidney and liver.

This is an uncharacterized protein from Homo sapiens (Human).